Consider the following 297-residue polypeptide: NADPH-dependent 1-acyldihydroxyacetone phosphate reductase (297 aa).

The short motif at 16-20 is the GXSXG element; the sequence is GASGG. The active-site Nucleophile; for lipase activity is serine 18. Positions 21, 64, 93, 126, 157, 161, 190, and 192 each coordinate NADP(+). The active-site Proton acceptor is tyrosine 157. The active-site Lowers pKa of active site Tyr is lysine 161.

This sequence belongs to the short-chain dehydrogenases/reductases (SDR) family.

It is found in the lipid droplet. It localises to the mitochondrion outer membrane. Its subcellular location is the endoplasmic reticulum. It carries out the reaction a 1-acylglycerone 3-phosphate + NADPH + H(+) = a 1-acyl-sn-glycero-3-phosphate + NADP(+). The catalysed reaction is 1-hexadecanoyl-sn-glycero-3-phosphate + NADP(+) = 1-hexadecanoylglycerone 3-phosphate + NADPH + H(+). It catalyses the reaction a triacylglycerol + H2O = a diacylglycerol + a fatty acid + H(+). The enzyme catalyses 1,2,3-tri-(9Z-octadecenoyl)-glycerol + H2O = di-(9Z)-octadecenoylglycerol + (9Z)-octadecenoate + H(+). With respect to regulation, inhibited by divalent cations and N-ethylmaleimide. Activity is reduced under anaerobic growth conditions. In terms of biological role, can convert acyl and alkyl dihydroxyacetone-phosphate (DHAP) into glycerolipids and ether lipids, respectively. Required for the biosynthesis of phosphatidic acid via the DHAP pathway, where it reduces 1-acyl DHAP to lysophosphatidic acid (LPA). Also has triacylglycerol (TAG) lipase activity. Involved in the mobilization of the non-polar storage lipids triacylglycerols (TAGs) from lipid particles by hydrolysis of TAGs. Required for spore germination. Plays a role in cell wall biogenesis, but this effect may be indirect by affecting the activities of cell wall synthesis enzymes. Lipolysis of TAG by AYR1 is essential for starvation-induced autophagy. Forms an NADPH-regulated cation-selective channel in the mitochondrial outer membrane. In Saccharomyces cerevisiae (strain ATCC 204508 / S288c) (Baker's yeast), this protein is NADPH-dependent 1-acyldihydroxyacetone phosphate reductase.